The chain runs to 74 residues: Cecropin-P2 (74 aa).

Positions 1–13 are cleaved as a signal peptide; it reads MIFIYLLVQTAES. Residues 45 to 74 constitute a propeptide, removed in mature form; it reads RRRFVVQQDTISPRLEVDERFLPNSVQEQI.

Belongs to the cecropin family. As to expression, expressed in the body wall, intestine, uterus and ovary.

Its subcellular location is the secreted. In terms of biological role, has antibacterial activity against several Gram-positive and Gram-negative bacteria. Is weakly active against yeasts. Acts by a nonpore mechanism. This Ascaris suum (Pig roundworm) protein is Cecropin-P2 (ASCEC-2).